Here is an 837-residue protein sequence, read N- to C-terminus: E3 ubiquitin-protein ligase bre-1 (837 aa).

The interval 1–33 (MMKRSNEGIGGENYASSPSDDGQQKRRKIQFEP) is disordered. Residues 1–313 (MMKRSNEGIG…AKEIENLRLE (313 aa)) are interaction with ubc-1. Coiled coils occupy residues 54–89 (TSKL…ESNF) and 185–253 (HKEL…KHMR). Residues 269 to 302 (GQSGGNGGATPSSSGTTNATEKKISAPDIPPSET) are disordered. Polar residues predominate over residues 277-287 (ATPSSSGTTNA). Coiled-coil stretches lie at residues 300-397 (SETA…AFRS), 458-651 (DEMK…KAQT), and 677-763 (VQFK…NESV). The RING-type zinc-finger motif lies at 785–824 (CPSCKTRPKDCIMLKCYHLFCETCIKTMYDTRQRKCPKCN).

This sequence belongs to the BRE1 family. As to quaternary structure, interacts with ubc-1. Interacts with mrg-1. In adult animals, expressed in oocytes, germ cells, pharyngeal and intestinal cells.

It localises to the nucleus. It catalyses the reaction S-ubiquitinyl-[E2 ubiquitin-conjugating enzyme]-L-cysteine + [acceptor protein]-L-lysine = [E2 ubiquitin-conjugating enzyme]-L-cysteine + N(6)-ubiquitinyl-[acceptor protein]-L-lysine.. Its pathway is protein modification; protein ubiquitination. Its function is as follows. E3 ubiquitin-protein ligase that mediates monoubiquitination of 'Lys-117' of histone H2B. H2B 'Lys-117' ubiquitination gives a specific tag for epigenetic transcriptional activation and is also prerequisite for histone H3 'Lys-4' and 'Lys-79' methylation. Involved in regulating stem cell proliferative fate. The chain is E3 ubiquitin-protein ligase bre-1 (rfp-1) from Caenorhabditis elegans.